A 422-amino-acid polypeptide reads, in one-letter code: UPF0229 protein Spro_2732 (422 aa).

The segment covering 77-90 has biased composition (basic and acidic residues); it reads PGNDHFVQNDRVER. Residues 77–109 are disordered; it reads PGNDHFVQNDRVERPQGGGGGGSGQGNASQDGE. Positions 92–101 are enriched in gly residues; sequence QGGGGGGSGQ.

This sequence belongs to the UPF0229 family.

This is UPF0229 protein Spro_2732 from Serratia proteamaculans (strain 568).